We begin with the raw amino-acid sequence, 253 residues long: Large ribosomal subunit protein uL4 (253 aa).

A disordered region spans residues 62-107; it reads WGSGRGVSHVPRLKNSSRAARVPHAKGGRRAHPPKPEADRSEKVNT. Over residues 82-94 the composition is skewed to basic residues; it reads RVPHAKGGRRAHP. Residues 95–107 are compositionally biased toward basic and acidic residues; it reads PKPEADRSEKVNT.

Belongs to the universal ribosomal protein uL4 family. As to quaternary structure, part of the 50S ribosomal subunit.

In terms of biological role, one of the primary rRNA binding proteins, this protein initially binds near the 5'-end of the 23S rRNA. It is important during the early stages of 50S assembly. It makes multiple contacts with different domains of the 23S rRNA in the assembled 50S subunit and ribosome. Forms part of the polypeptide exit tunnel. In Methanosarcina mazei (strain ATCC BAA-159 / DSM 3647 / Goe1 / Go1 / JCM 11833 / OCM 88) (Methanosarcina frisia), this protein is Large ribosomal subunit protein uL4.